The primary structure comprises 145 residues: U1 small nuclear ribonucleoprotein C (145 aa).

The Matrin-type zinc-finger motif lies at 4 to 36; the sequence is YYCDYCDTYLTHDSPSVRKTHCTGRKHRDNVKF. Residues 67–91 are disordered; the sequence is FAGGPGGAPPKPAGVSIPPPNMGAP. Residues 73-91 show a composition bias toward pro residues; it reads GAPPKPAGVSIPPPNMGAP.

It belongs to the U1 small nuclear ribonucleoprotein C family. In terms of assembly, U1 snRNP is composed of the 7 core Sm proteins B/B', D1, D2, D3, E, F and G that assemble in a heptameric protein ring on the Sm site of the small nuclear RNA to form the core snRNP, and at least 3 U1 snRNP-specific proteins U1-70K, U1-A and U1-C. U1-C interacts with U1 snRNA and the 5' splice-site region of the pre-mRNA.

It is found in the nucleus. In terms of biological role, component of the spliceosomal U1 snRNP, which is essential for recognition of the pre-mRNA 5' splice-site and the subsequent assembly of the spliceosome. U1-C is directly involved in initial 5' splice-site recognition for both constitutive and regulated alternative splicing. The interaction with the 5' splice-site seems to precede base-pairing between the pre-mRNA and the U1 snRNA. Stimulates commitment or early (E) complex formation by stabilizing the base pairing of the 5' end of the U1 snRNA and the 5' splice-site region. Regulates alternative splicing of a distinct group of target genes. This chain is U1 small nuclear ribonucleoprotein C, found in Drosophila melanogaster (Fruit fly).